A 163-amino-acid chain; its full sequence is Cyclic pyranopterin monophosphate synthase (163 aa).

Residues 75 to 77 and 113 to 114 contribute to the substrate site; these read LCH and ME. Asp-128 is an active-site residue.

The protein belongs to the MoaC family. As to quaternary structure, homohexamer; trimer of dimers.

It catalyses the reaction (8S)-3',8-cyclo-7,8-dihydroguanosine 5'-triphosphate = cyclic pyranopterin phosphate + diphosphate. It functions in the pathway cofactor biosynthesis; molybdopterin biosynthesis. Its function is as follows. Catalyzes the conversion of (8S)-3',8-cyclo-7,8-dihydroguanosine 5'-triphosphate to cyclic pyranopterin monophosphate (cPMP). The chain is Cyclic pyranopterin monophosphate synthase from Jannaschia sp. (strain CCS1).